We begin with the raw amino-acid sequence, 736 residues long: Poly(A) polymerase gamma (736 aa).

Lysine 2 is modified (N6-acetyllysine). Phosphoserine is present on residues serine 23 and serine 29. Residues 99–101 (FGS), threonine 108, 112–114 (DID), aspartate 166, lysine 227, tyrosine 236, and 245–246 (GV) each bind ATP. Positions 112, 114, and 166 each coordinate Mg(2+). Residues 506–564 (KQSLSDVNRSSGGLQSKRLSLDSSCLDSSRDTDNGTPFNSPASKSDSPSVGETERNSAE) are disordered. The span at 509–519 (LSDVNRSSGGL) shows a compositional bias: polar residues. Residues 521 to 532 (SKRLSLDSSCLD) are compositionally biased toward low complexity. Serine 525 carries the post-translational modification Phosphoserine. The segment covering 539–555 (NGTPFNSPASKSDSPSV) has biased composition (polar residues). Residues serine 599 and serine 648 each carry the phosphoserine modification. Residue threonine 654 is modified to Phosphothreonine. Residues 673–685 (DPRTAEERKRKSV) show a composition bias toward basic and acidic residues. A disordered region spans residues 673 to 720 (DPRTAEERKRKSVDAIGGESMPIPTIDTSRKKRLPSKELPDSSSPVPA). A phosphoserine mark is found at serine 684 and serine 708.

The protein belongs to the poly(A) polymerase family. Mg(2+) is required as a cofactor. Mn(2+) serves as cofactor. As to expression, expressed predominantly in testis, and weakly in other tissues. Overexpressed in several tumors.

It localises to the nucleus. The catalysed reaction is RNA(n) + ATP = RNA(n)-3'-adenine ribonucleotide + diphosphate. Functionally, responsible for the post-transcriptional adenylation of the 3'-terminal of mRNA precursors and several small RNAs including signal recognition particle (SRP) RNA, nuclear 7SK RNA, U2 small nuclear RNA, and ribosomal 5S RNA. The polypeptide is Poly(A) polymerase gamma (Homo sapiens (Human)).